The following is an 896-amino-acid chain: Pentatricopeptide repeat-containing protein At5g03800 (896 aa).

PPR repeat units lie at residues 113-143 (KTRL…LSSP), 144-178 (TVVS…GLVQ), 180-214 (NEYT…GFLN), 215-247 (SVFV…IPQR), 248-278 (DVAS…MNRV), 284-318 (DSFT…GLMQ), 319-349 (ELSV…MMAQ), 350-380 (DAVT…VTEK), 381-415 (NTIT…GVEL), 416-450 (TDFS…GTAF), 451-481 (NPCI…WPSN), 484-519 (SSKA…KLFL), 520-554 (DEVS…GYFS), 555-585 (DISL…MREH), 586-620 (DVIS…EIKP), 621-653 (DIIT…MKTI), and 659-689 (TTEH…MPVQ). Residues 694-769 (VLRALLDSCR…HPAKSWIIHE (76 aa)) are type E motif. The segment at 770–800 (NKIHSFHARDTSHPQEKDIYRGLEILIMECL) is type E(+) motif. Residues 801 to 896 (KVGYEPNTEY…NGKCSCRDLW (96 aa)) are type DYW motif.

This sequence belongs to the PPR family. PCMP-H subfamily.

Its function is as follows. May play a role in embryogenesis. The chain is Pentatricopeptide repeat-containing protein At5g03800 (EMB175) from Arabidopsis thaliana (Mouse-ear cress).